The sequence spans 168 residues: MANRNDSRNNRRNKDDIEDQLVAVNRITKVVKGGRRMRFAALVVVGDKKGRVGFGTGKAQEVPEAIRKAVEDGKKKMINVPKVGTTIPHEVIGHYGSGNILLKPAEAGSGVAAGGAVRIVMDMAGISDVTSKSLGSNTPINVVRATIDGLKKLRTSEEVNKLRQPERA.

The 64-residue stretch at 17–80 (IEDQLVAVNR…EDGKKKMINV (64 aa)) folds into the S5 DRBM domain.

The protein belongs to the universal ribosomal protein uS5 family. As to quaternary structure, part of the 30S ribosomal subunit. Contacts proteins S4 and S8.

Functionally, with S4 and S12 plays an important role in translational accuracy. Located at the back of the 30S subunit body where it stabilizes the conformation of the head with respect to the body. The chain is Small ribosomal subunit protein uS5 from Lactobacillus helveticus (strain DPC 4571).